The sequence spans 192 residues: Putative BTB/POZ domain-containing protein At4g04090 (192 aa).

A BTB domain is found at 23-96 (VDVRLMARDS…TYSDGSMLSE (74 aa)).

Its pathway is protein modification; protein ubiquitination. May act as a substrate-specific adapter of an E3 ubiquitin-protein ligase complex (CUL3-RBX1-BTB) which mediates the ubiquitination and subsequent proteasomal degradation of target proteins. The sequence is that of Putative BTB/POZ domain-containing protein At4g04090 from Arabidopsis thaliana (Mouse-ear cress).